A 1072-amino-acid polypeptide reads, in one-letter code: Guanylyl cyclase C (1072 aa).

The N-terminal stretch at 1 to 19 is a signal peptide; it reads MTSLLGLAVRLLLFQPALM. Residues 20-433 are Extracellular-facing; sequence VFWASQVRQN…VPGLGPQILM (414 aa). Asn-32, Asn-75, Asn-79, Asn-179, Asn-188, Asn-195, Asn-284, Asn-307, Asn-345, and Asn-402 each carry an N-linked (GlcNAc...) asparagine glycan. The chain crosses the membrane as a helical span at residues 434-454; sequence IAVFTLTGILVVLLLIALLVL. Over 455–1072 the chain is Cytoplasmic; that stretch reads RKYRRDHALR…NNSDHDSTYF (618 aa). Residues 489-748 enclose the Protein kinase domain; sequence LKIDDDRRRD…KIESTLAKIF (260 aa). Positions 823–953 constitute a Guanylate cyclase domain; the sequence is TIYFSDIVGF…DTVNTASRME (131 aa).

It belongs to the adenylyl cyclase class-4/guanylyl cyclase family. As to quaternary structure, homotrimer. Interacts via its C-terminal region with NHERF4. Interacts with the lectin chaperone VIP36. In terms of processing, glycosylation at Asn-75 and/or Asn-79 is required for interaction with VIP36 while glycosylation at Asn-345 and Asn-402 modulates ligand-mediated GC-C activation.

It localises to the cell membrane. The protein localises to the endoplasmic reticulum membrane. It catalyses the reaction GTP = 3',5'-cyclic GMP + diphosphate. Its function is as follows. Guanylyl cyclase that catalyzes synthesis of cyclic GMP (cGMP) from GTP. The sequence is that of Guanylyl cyclase C (Gucy2c) from Mus musculus (Mouse).